Consider the following 100-residue polypeptide: Large ribosomal subunit protein uL23 (100 aa).

Belongs to the universal ribosomal protein uL23 family. In terms of assembly, part of the 50S ribosomal subunit. Contacts protein L29, and trigger factor when it is bound to the ribosome.

One of the early assembly proteins it binds 23S rRNA. One of the proteins that surrounds the polypeptide exit tunnel on the outside of the ribosome. Forms the main docking site for trigger factor binding to the ribosome. This chain is Large ribosomal subunit protein uL23, found in Buchnera aphidicola subsp. Acyrthosiphon pisum (strain 5A).